Here is a 318-residue protein sequence, read N- to C-terminus: Cyclic AMP receptor-like protein F (318 aa).

Residues 1–3 (MKD) are Extracellular-facing. A helical transmembrane segment spans residues 4-24 (IILIYMICAPISMIGSLFIII). At 25-38 (TWLLYAKLKNSGSN) the chain is on the cytoplasmic side. The chain crosses the membrane as a helical span at residues 39–59 (FIFFQAISDFFFTSKYIITII). The Extracellular portion of the chain corresponds to 60–83 (FYYINIPQFSDETSSTDTNPYCFS). An intrachain disulfide couples C81 to C177. A helical transmembrane segment spans residues 84–104 (LGLFSQFFGQATIMWSYTMTV). At 105–145 (KVFHSYFEMKKKNNNNNIGSNNIGGGGGGNNSNKQNSIDKT) the chain is on the cytoplasmic side. A helical transmembrane segment spans residues 146-166 (LKWYHLFVWGFCLVNATIIGI). Over 167 to 187 (SKQYGPSSTGCWIVGANNPYR) the chain is Extracellular. The chain crosses the membrane as a helical span at residues 188-208 (FFELVPLYFTITTSIIILILI). Over 209 to 234 (LVKMKKSKPSSLLPTESMRYNQQARE) the chain is Cytoplasmic. Residues 235-255 (FKIQLMKFVLIFIIFWLPATV) form a helical membrane-spanning segment. Topologically, residues 256–267 (LRTLEYFGIEKT) are extracellular. A helical membrane pass occupies residues 268 to 288 (FFILLDAVSVSLQALANSLVW). Residues 289 to 318 (ATSPQFLKLMKRKVVNKPNKQMEREYLINK) are Cytoplasmic-facing.

The protein belongs to the G-protein coupled receptor 5 family.

It localises to the membrane. In terms of biological role, receptor for cAMP. This is Cyclic AMP receptor-like protein F (crlF) from Dictyostelium discoideum (Social amoeba).